We begin with the raw amino-acid sequence, 370 residues long: Quinolinate synthase (370 aa).

His-62 and Ser-83 together coordinate iminosuccinate. Residue Cys-128 coordinates [4Fe-4S] cluster. Residues 154–156 and Ser-171 contribute to the iminosuccinate site; that span reads YAN. Cys-215 is a binding site for [4Fe-4S] cluster. Iminosuccinate is bound by residues 241–243 and Thr-258; that span reads HPE. Cys-312 is a binding site for [4Fe-4S] cluster.

This sequence belongs to the quinolinate synthase family. Type 1 subfamily. The cofactor is [4Fe-4S] cluster.

It localises to the cytoplasm. It catalyses the reaction iminosuccinate + dihydroxyacetone phosphate = quinolinate + phosphate + 2 H2O + H(+). It participates in cofactor biosynthesis; NAD(+) biosynthesis; quinolinate from iminoaspartate: step 1/1. Its function is as follows. Catalyzes the condensation of iminoaspartate with dihydroxyacetone phosphate to form quinolinate. In Neisseria meningitidis serogroup C (strain 053442), this protein is Quinolinate synthase.